Consider the following 208-residue polypeptide: Small ribosomal subunit protein uS4 (208 aa).

Residues 98–158 (RRLDNVVYRL…EKSRGQLRIK (61 aa)) enclose the S4 RNA-binding domain.

Belongs to the universal ribosomal protein uS4 family. Part of the 30S ribosomal subunit. Contacts protein S5. The interaction surface between S4 and S5 is involved in control of translational fidelity.

In terms of biological role, one of the primary rRNA binding proteins, it binds directly to 16S rRNA where it nucleates assembly of the body of the 30S subunit. With S5 and S12 plays an important role in translational accuracy. The protein is Small ribosomal subunit protein uS4 of Magnetococcus marinus (strain ATCC BAA-1437 / JCM 17883 / MC-1).